A 360-amino-acid polypeptide reads, in one-letter code: Peptide chain release factor 1 (360 aa).

Q237 bears the N5-methylglutamine mark.

It belongs to the prokaryotic/mitochondrial release factor family. Methylated by PrmC. Methylation increases the termination efficiency of RF1.

The protein localises to the cytoplasm. Peptide chain release factor 1 directs the termination of translation in response to the peptide chain termination codons UAG and UAA. The protein is Peptide chain release factor 1 of Pseudomonas fluorescens (strain SBW25).